The sequence spans 172 residues: Small ribosomal subunit protein uS5 (172 aa).

Positions 17 to 80 (LREKMISVNR…EQARRNMFKV (64 aa)) constitute an S5 DRBM domain.

Belongs to the universal ribosomal protein uS5 family. Part of the 30S ribosomal subunit. Contacts proteins S4 and S8.

With S4 and S12 plays an important role in translational accuracy. In terms of biological role, located at the back of the 30S subunit body where it stabilizes the conformation of the head with respect to the body. This is Small ribosomal subunit protein uS5 from Burkholderia lata (strain ATCC 17760 / DSM 23089 / LMG 22485 / NCIMB 9086 / R18194 / 383).